The sequence spans 145 residues: Lipoprotein signal peptidase (145 aa).

Helical transmembrane passes span 57–77 (LFFI…MIKL) and 79–99 (ENSL…GNLI). Residues aspartate 109 and aspartate 124 contribute to the active site. Residues 120–140 (FNVADSFIVVGAIILGYLMIF) form a helical membrane-spanning segment.

Belongs to the peptidase A8 family.

The protein resides in the cell membrane. It catalyses the reaction Release of signal peptides from bacterial membrane prolipoproteins. Hydrolyzes -Xaa-Yaa-Zaa-|-(S,diacylglyceryl)Cys-, in which Xaa is hydrophobic (preferably Leu), and Yaa (Ala or Ser) and Zaa (Gly or Ala) have small, neutral side chains.. The protein operates within protein modification; lipoprotein biosynthesis (signal peptide cleavage). This protein specifically catalyzes the removal of signal peptides from prolipoproteins. This is Lipoprotein signal peptidase from Caldanaerobacter subterraneus subsp. tengcongensis (strain DSM 15242 / JCM 11007 / NBRC 100824 / MB4) (Thermoanaerobacter tengcongensis).